We begin with the raw amino-acid sequence, 723 residues long: BTB/POZ domain-containing protein 18 (723 aa).

The BTB domain maps to 34–102; that stretch reads CDALLQAEGE…LYTSEMEVSQ (69 aa). Disordered regions lie at residues 150 to 176, 188 to 350, and 370 to 394; these read APIS…PSPL, EGAH…EEGQ, and EPPL…PSGT. Composition is skewed to polar residues over residues 162-174 and 195-205; these read RPQT…QTPS and NLPNADSLSDT. Composition is skewed to low complexity over residues 217–227 and 271–286; these read QESRSSPSSQR and TSTP…SMPT. Basic and acidic residues-rich tracts occupy residues 303–312 and 327–336; these read QGVDKQKPGE and KPAENKKQSP. S414 bears the Phosphoserine mark. The disordered stretch occupies residues 603 to 637; the sequence is TPDLEITSSQPLDGQGEKLLHFDSSDPSQRSYNHL. Positions 617–626 are enriched in basic and acidic residues; sequence QGEKLLHFDS. Residues 627-636 show a composition bias toward polar residues; that stretch reads SDPSQRSYNH. S682 and S683 each carry phosphoserine. The interval 699 to 723 is disordered; sequence LGPTSVPSVWPDPSSESETEVDILT. Residues 713 to 723 are compositionally biased toward acidic residues; that stretch reads SESETEVDILT.

In terms of tissue distribution, expressed in testis.

The protein localises to the nucleus. Specifically required during spermatogenesis to promote expression of piRNA precursors. The piRNA metabolic process mediates the repression of transposable elements during meiosis by forming complexes composed of piRNAs and Piwi proteins and governs the methylation and subsequent repression of transposons, which is essential for the germline integrity. Acts by facilitating transcription elongation at piRNA loci during pachytene. This Mus musculus (Mouse) protein is BTB/POZ domain-containing protein 18.